Reading from the N-terminus, the 350-residue chain is Ion-translocating oxidoreductase complex subunit D (350 aa).

Helical transmembrane passes span 25–45, 89–109, and 124–144; these read ALCLIPGILVQTLFFGFGSLI, IPPLAPWWLVVIGSLFAIIIV, and AMAGYVVLLVSFPLQMTSWVA. At Thr-185 the chain carries FMN phosphoryl threonine. 5 consecutive transmembrane segments (helical) span residues 212 to 232, 239 to 259, 265 to 285, 298 to 318, and 319 to 339; these read SYGVGWFWVNLAYLAGGLVLL, WHISVGILAALFVCASFGFLI, VSPLFHWFSGGTMLAVFFIAT, LIFGASIGIIIYLIRTYGGYP, and DAVAFAVLLANMCAPFIDHYV.

This sequence belongs to the NqrB/RnfD family. In terms of assembly, the complex is composed of six subunits: RnfA, RnfB, RnfC, RnfD, RnfE and RnfG. FMN serves as cofactor.

It localises to the cell inner membrane. In terms of biological role, part of a membrane-bound complex that couples electron transfer with translocation of ions across the membrane. This chain is Ion-translocating oxidoreductase complex subunit D, found in Shewanella denitrificans (strain OS217 / ATCC BAA-1090 / DSM 15013).